We begin with the raw amino-acid sequence, 1111 residues long: Receptor-type guanylate cyclase gcy-14 (1111 aa).

Residues 1–14 (MCLFLLLFPYLASG) form the signal peptide. The Extracellular portion of the chain corresponds to 15-473 (QFLQTVKVGL…ECPPDFVKEY (459 aa)). Residues asparagine 65, asparagine 130, asparagine 318, asparagine 340, asparagine 365, and asparagine 379 are each glycosylated (N-linked (GlcNAc...) asparagine). The helical transmembrane segment at 474–494 (LVYTIIAAVIVVLALLAGCAG) threads the bilayer. Positions 482-817 (VIVVLALLAG…KSNLMDHVFN (336 aa)) constitute a Protein kinase domain. Residues 488–496 (LLAGCAGLL) and lysine 545 each bind ATP. The Cytoplasmic segment spans residues 495 to 1111 (LLYTMQMKRK…DFNNGNECVS (617 aa)). The Guanylate cyclase domain maps to 875-1005 (TIFFSDVVQF…DAVNTASRME (131 aa)). The interval 1061-1082 (SAQAPREKTPEPPRRQSVRSIS) is disordered. A compositionally biased stretch (basic and acidic residues) spans 1065–1074 (PREKTPEPPR).

It belongs to the adenylyl cyclase class-4/guanylyl cyclase family. Homodimer. In terms of tissue distribution, expressed asymmetrically in ASEL sensory neuron.

It is found in the cell membrane. The protein localises to the cell projection. The protein resides in the cilium. It carries out the reaction GTP = 3',5'-cyclic GMP + diphosphate. Functionally, guanylate cyclase involved in the production of the second messenger cGMP. Regulates chemotaxis responses toward Na(1+) and Li(1+) salt ions and alkaline pH in ASE left (ASEL) sensory neuron. Directly senses environmental alkalinity in ASEL neuron which probably leads to the activation of cGMP-gated cation channel tax2/tax4. The protein is Receptor-type guanylate cyclase gcy-14 of Caenorhabditis elegans.